A 2523-amino-acid polypeptide reads, in one-letter code: Non-reducing polyketide synthase Preu3 (2523 aa).

An N-terminal acylcarrier protein transacylase domain (SAT) region spans residues 58–247 (LQSLASERRA…KILAMTGSFH (190 aa)). The Ketosynthase family 3 (KS3) domain occupies 373-792 (DNAVAVVGMA…GSNGAMIVCQ (420 aa)). Catalysis depends on for beta-ketoacyl synthase activity residues Cys539, His674, and His715. Positions 900 to 1207 (CFGGQVKAFV…KAFGSLADAT (308 aa)) are malonyl-CoA:ACP transacylase (MAT) domain. Ser986 functions as the For acyl/malonyl transferase activity in the catalytic mechanism. The interval 1271 to 1398 (HELLTFSSFE…GLVAFGGTVE (128 aa)) is N-terminal hotdog fold. Residues 1271–1573 (HELLTFSSFE…FTRVTVPGLR (303 aa)) form the PKS/mFAS DH domain. The product template (PT) domain stretch occupies residues 1301 to 1568 (LVKGHAVVAQ…ALGCRFTRVT (268 aa)). The active-site Proton acceptor; for dehydratase activity is the His1305. The interval 1421 to 1573 (ECDALRGSAT…FTRVTVPGLR (153 aa)) is C-terminal hotdog fold. Residue Asp1483 is the Proton donor; for dehydratase activity of the active site. The segment at 1579–1601 (ANGDARAQERPSGSRISPSPLAP) is disordered. The Carrier domain occupies 1639–1713 (VDYLAQVKAL…KLAEYLAKTL (75 aa)). Ser1673 is modified (O-(pantetheine 4'-phosphoryl)serine). The interval 1735-1757 (DAEQSSDESPYDSTDDSASGYGD) is disordered. A compositionally biased stretch (acidic residues) spans 1738–1749 (QSSDESPYDSTD). Positions 1986 to 2085 (LEIGGGTGGT…MRQLLSSEGF (100 aa)) are methyltransferase (CMeT) domain. The thioesterase (TE) domain stretch occupies residues 2218 to 2520 (LILHGGGHVL…RALEWLVEQC (303 aa)).

Pantetheine 4'-phosphate serves as cofactor.

The enzyme catalyses 3 malonyl-CoA + acetyl-CoA + S-adenosyl-L-methionine + H(+) = 3-methylorsellinate + S-adenosyl-L-homocysteine + 3 CO2 + 4 CoA. Non-reducing polyketide synthase; part of a gene cluster that mediates the biosynthesis of a yet unidentified natural product. The first step in the pathway is performed by Preu3 that condenses one acetyl-CoA starter unit with 3 malonyl-CoA units. Preu3 also catalyzes one methylation step to produce 3-methylorsellinate, an intermediate that exhibits significant antibacterial activities against methicillin-resistant Staphylococcus aureus, multidrug-resistant Enterococcus faecalis, multidrug-resistant Enterococcus faecium, and multidrug-resistant Staphylococcus epidermidis. The sequence is that of Non-reducing polyketide synthase Preu3 from Preussia isomera (Coprophilous fungus).